Consider the following 354-residue polypeptide: Probable cinnamyl alcohol dehydrogenase 5 (354 aa).

Residue Cys43 coordinates Zn(2+). Ser45 lines the NADP(+) pocket. 7 residues coordinate Zn(2+): His65, Glu66, Cys96, Cys99, Cys102, Cys110, and Cys159. NADP(+)-binding positions include Thr163, 184–189 (GLGGLG), 207–212 (SSSPGK), Thr247, Gly271, and 294–296 (SCI).

Belongs to the zinc-containing alcohol dehydrogenase family. In terms of assembly, homodimer. Zn(2+) serves as cofactor.

It carries out the reaction (E)-cinnamyl alcohol + NADP(+) = (E)-cinnamaldehyde + NADPH + H(+). It catalyses the reaction (E)-coniferol + NADP(+) = (E)-coniferaldehyde + NADPH + H(+). The enzyme catalyses (E)-sinapyl alcohol + NADP(+) = (E)-sinapaldehyde + NADPH + H(+). The catalysed reaction is (E)-4-coumaroyl alcohol + NADP(+) = (E)-4-coumaraldehyde + NADPH + H(+). It carries out the reaction (E)-caffeyl alcohol + NADP(+) = (E)-caffeyl aldehyde + NADPH + H(+). The protein operates within aromatic compound metabolism; phenylpropanoid biosynthesis. Involved in lignin biosynthesis. Catalyzes the final step specific for the production of lignin monomers. Catalyzes the NADPH-dependent reduction of coniferaldehyde, 5-hydroxyconiferaldehyde, sinapaldehyde, 4-coumaraldehyde and caffeyl aldehyde to their respective alcohols. The chain is Probable cinnamyl alcohol dehydrogenase 5 from Oryza sativa subsp. japonica (Rice).